The sequence spans 433 residues: Legumain (433 aa).

The N-terminal stretch at 1–17 is a signal peptide; it reads MVWKVAVFLSVALGIGA. An N-linked (GlcNAc...) asparagine glycan is attached at Asn-91. The active site involves His-148. Asn-167 is a glycosylation site (N-linked (GlcNAc...) asparagine). Cys-189 (nucleophile) is an active-site residue. Asn-263 and Asn-272 each carry an N-linked (GlcNAc...) asparagine glycan. A propeptide spanning residues 324-433 is cleaved from the precursor; sequence DLEESRQLTE…SMDHVCLGHY (110 aa). Intrachain disulfides connect Cys-378/Cys-412 and Cys-390/Cys-429.

Belongs to the peptidase C13 family. In terms of assembly, homodimer before autocatalytic removal of the propeptide. Monomer after autocatalytic processing. May interact with integrins. Post-translationally, activated by autocatalytic processing at pH 4. As to expression, ubiquitous. Particularly abundant in kidney, heart and placenta.

Its subcellular location is the lysosome. The enzyme catalyses Hydrolysis of proteins and small molecule substrates at -Asn-|-Xaa- bonds.. Inhibited by CST6. Its function is as follows. Has a strict specificity for hydrolysis of asparaginyl bonds. Can also cleave aspartyl bonds slowly, especially under acidic conditions. Involved in the processing of proteins for MHC class II antigen presentation in the lysosomal/endosomal system. Also involved in MHC class I antigen presentation in cross-presenting dendritic cells by mediating cleavage and maturation of Perforin-2 (MPEG1), thereby promoting antigen translocation in the cytosol. Required for normal lysosomal protein degradation in renal proximal tubules. Required for normal degradation of internalized EGFR. Plays a role in the regulation of cell proliferation via its role in EGFR degradation. The polypeptide is Legumain (Homo sapiens (Human)).